A 454-amino-acid chain; its full sequence is CBL-interacting protein kinase 33 (454 aa).

The Protein kinase domain occupies 13-268 (YELGRTIGEG…IPEILEDEWF (256 aa)). Residues 19–27 (IGEGTFAKV) and Lys-42 contribute to the ATP site. Asp-136 acts as the Proton acceptor in catalysis. The segment at 154-183 (DFGLSALSQQIKDDGLLHTTCGTPNYVAPE) is activation loop. The NAF domain occupies 305-329 (EEPEALNAFELISMSAGLNLGNLFD). The tract at residues 335-364 (KRETRFTSKCPPKEIVRKIEEAAKPLGFDV) is PPI.

It belongs to the protein kinase superfamily. CAMK Ser/Thr protein kinase family. SNF1 subfamily. It depends on Mn(2+) as a cofactor.

The enzyme catalyses L-seryl-[protein] + ATP = O-phospho-L-seryl-[protein] + ADP + H(+). It carries out the reaction L-threonyl-[protein] + ATP = O-phospho-L-threonyl-[protein] + ADP + H(+). CIPK serine-threonine protein kinases interact with CBL proteins. Binding of a CBL protein to the regulatory NAF domain of CIPK protein lead to the activation of the kinase in a calcium-dependent manner. The sequence is that of CBL-interacting protein kinase 33 (CIPK33) from Oryza sativa subsp. japonica (Rice).